The chain runs to 625 residues: Ankyrin repeat domain-containing protein oryK (625 aa).

ANK repeat units lie at residues 1-27, 31-60, 62-89, 90-119, 162-195, 202-232, 500-530, 534-562, and 568-598; these read MDIYEAASQGRIDAIKFAVEQGCDVDG, DGKTPLWFAVQSGQPEACRFLMSLGAGRGP, NPSLLEVAVGGGYADIVALLWPHCNAER, EHRSLKTAISLGFHEIADFLIETGAFEYQD, FFDYALLLATKAGRNAGLRLVEFLLGESMPDVNC, QFETPLTAAAEKGNLEILATLIDHPNIDLTI, DTRCPLSWAAKSHNAPLVNALLRSPQVNVNF, SDRTPLLYAIAVNDRPIVERLLNHRDIDL, and EGRTAIFYAAQGGDLSIVQLLIGTQNVDFSI.

The protein operates within secondary metabolite biosynthesis. Ankyrin repeat domain-containing protein; part of the gene cluster that mediates the biosynthesis of oryzines, natural products with an unusual maleidride backbone. The two subunits of the fungal fatty acid synthase oryfasA and oryfasB probably form octenoic acid. This fatty acid is most likely activated by the acyl-CoA ligase oryP to give octenyl-CoA before the citrate synthase-like protein oryE catalyzes condensation with oxaloacetate to form tricarboxylic acid. The next steps of the pathways are conjectural, but a favorite possible route has been proposed, beginning with decarboxylation and concomitant dehydration by the decarboxylase oryM, followed by tautomerization, which may lead to the production of a diene intermediate. Reduction of this diene intermediate could give the known metabolite piliformic acid. On the pathway to oryzine B and oryzine A, however, hydroxylation of the diene by the alpha-ketoglutarate-dependent dioxygenase oryG and lactonisation by the lactonohydrolases oryH or oryL could give oryzine B directly. Finally, enoyl reduction by the dehydrogenase oryD would then convert oryzine B into oryzine A. This is Ankyrin repeat domain-containing protein oryK from Aspergillus oryzae (strain ATCC 42149 / RIB 40) (Yellow koji mold).